Consider the following 90-residue polypeptide: Small ribosomal subunit protein bS18 (90 aa).

Belongs to the bacterial ribosomal protein bS18 family. In terms of assembly, part of the 30S ribosomal subunit. Forms a tight heterodimer with protein bS6.

Its function is as follows. Binds as a heterodimer with protein bS6 to the central domain of the 16S rRNA, where it helps stabilize the platform of the 30S subunit. The sequence is that of Small ribosomal subunit protein bS18 from Bordetella avium (strain 197N).